The chain runs to 456 residues: Adenylosuccinate lyase (456 aa).

Residues 15–16 (RY) and 90–92 (NHD) contribute to the N(6)-(1,2-dicarboxyethyl)-AMP site. Lys-94 bears the N6-acetyllysine mark. 122–123 (TS) contacts N(6)-(1,2-dicarboxyethyl)-AMP. His-171 functions as the Proton donor/acceptor in the catalytic mechanism. Residue Gln-247 coordinates N(6)-(1,2-dicarboxyethyl)-AMP. The active-site Proton donor/acceptor is Ser-295. Residues Ser-296, 301 to 303 (KVN), Asn-309, Arg-335, and 340 to 344 (STVLR) each bind N(6)-(1,2-dicarboxyethyl)-AMP. Lys-366 is subject to N6-acetyllysine.

Belongs to the lyase 1 family. Adenylosuccinate lyase subfamily. As to quaternary structure, homotetramer. Residues from neighboring subunits contribute catalytic and substrate-binding residues to each active site.

The catalysed reaction is N(6)-(1,2-dicarboxyethyl)-AMP = fumarate + AMP. The enzyme catalyses (2S)-2-[5-amino-1-(5-phospho-beta-D-ribosyl)imidazole-4-carboxamido]succinate = 5-amino-1-(5-phospho-beta-D-ribosyl)imidazole-4-carboxamide + fumarate. It functions in the pathway purine metabolism; AMP biosynthesis via de novo pathway; AMP from IMP: step 2/2. Its pathway is purine metabolism; IMP biosynthesis via de novo pathway; 5-amino-1-(5-phospho-D-ribosyl)imidazole-4-carboxamide from 5-amino-1-(5-phospho-D-ribosyl)imidazole-4-carboxylate: step 2/2. Catalyzes two reactions in de novo purine nucleotide biosynthesis. Catalyzes the breakdown of 5-aminoimidazole- (N-succinylocarboxamide) ribotide (SAICAR or 2-[5-amino-1-(5-phospho-beta-D-ribosyl)imidazole-4-carboxamido]succinate) to 5-aminoimidazole-4-carboxamide ribotide (AICAR or 5-amino-1-(5-phospho-beta-D-ribosyl)imidazole-4-carboxamide) and fumarate, and of adenylosuccinate (ADS or N(6)-(1,2-dicarboxyethyl)-AMP) to adenosine monophosphate (AMP) and fumarate. The protein is Adenylosuccinate lyase (purB) of Escherichia coli O6:H1 (strain CFT073 / ATCC 700928 / UPEC).